Here is a 31-residue protein sequence, read N- to C-terminus: MLTITSYFGFLLAALTITSALFIGLSKTRLI.

Residues Ile-4 to Gly-24 traverse the membrane as a helical segment.

Belongs to the PetL family. As to quaternary structure, the 4 large subunits of the cytochrome b6-f complex are cytochrome b6, subunit IV (17 kDa polypeptide, PetD), cytochrome f and the Rieske protein, while the 4 small subunits are PetG, PetL, PetM and PetN. The complex functions as a dimer.

The protein localises to the plastid. It is found in the chloroplast thylakoid membrane. In terms of biological role, component of the cytochrome b6-f complex, which mediates electron transfer between photosystem II (PSII) and photosystem I (PSI), cyclic electron flow around PSI, and state transitions. PetL is important for photoautotrophic growth as well as for electron transfer efficiency and stability of the cytochrome b6-f complex. In Solanum tuberosum (Potato), this protein is Cytochrome b6-f complex subunit 6.